Consider the following 303-residue polypeptide: GTP cyclohydrolase FolE2 (303 aa).

It belongs to the GTP cyclohydrolase IV family.

The catalysed reaction is GTP + H2O = 7,8-dihydroneopterin 3'-triphosphate + formate + H(+). It participates in cofactor biosynthesis; 7,8-dihydroneopterin triphosphate biosynthesis; 7,8-dihydroneopterin triphosphate from GTP: step 1/1. Converts GTP to 7,8-dihydroneopterin triphosphate. The protein is GTP cyclohydrolase FolE2 of Exiguobacterium sp. (strain ATCC BAA-1283 / AT1b).